We begin with the raw amino-acid sequence, 162 residues long: TNIPQTMQDLDLQEVAGKWHSVAMAASDISLLDSEEAPLRVYIEKLRPTPEDNLEIILREGENKGCAEKKIFAEKTESPAEFKINYLDEDTVFALDSDYKNYLFLCMKNAATPGQSLVCQYLARTQMVDEEIMEKFRRALQPLPGRVQIVPDLTRMAERCRI.

Cystine bridges form between Cys66–Cys160 and Cys106–Cys119.

The protein belongs to the calycin superfamily. Lipocalin family. Monomer. Synthesized in mammary gland and secreted in milk.

Its subcellular location is the secreted. Primary component of whey, it binds retinol and is probably involved in the transport of that molecule. This is Beta-lactoglobulin-1 (LGB1) from Equus asinus (Donkey).